Reading from the N-terminus, the 521-residue chain is Vang-like protein 2-A (521 aa).

Positions 1-81 are disordered; sequence MDNDSQYSGY…TTVVTGTSEH (81 aa). Residues 1 to 108 are Cytoplasmic-facing; it reads MDNDSQYSGY…AKLDCSRHLG (108 aa). The segment covering 15–33 has biased composition (basic residues); that stretch reads GHSRSSRKHRDRRERHRSK. Residues 57–67 show a composition bias toward basic and acidic residues; that stretch reads ESTRGEDRDDN. Low complexity predominate over residues 69–81; sequence GETTTVVTGTSEH. The helical transmembrane segment at 109–129 threads the bilayer; that stretch reads VVIGGALALLSFLTPIAFMLL. The Extracellular segment spans residues 130–147; that stretch reads PQILWREDLEQCGTACEG. A helical membrane pass occupies residues 148–168; that stretch reads LFISVAFKLLILLLGSWALFF. Residues 169–178 lie on the Cytoplasmic side of the membrane; it reads RRPKAFFPRV. Residues 179 to 199 traverse the membrane as a helical segment; it reads FVFRALLMVLVFLLVVSYWLF. The Extracellular segment spans residues 200 to 218; the sequence is YGVRILESRDKNYQGIVQY. The helical transmembrane segment at 219–239 threads the bilayer; sequence AVSLVDALLFVHYLAVVLLEL. Topologically, residues 240–521 are cytoplasmic; the sequence is RQLQPQFTIK…VMRLQSETSV (282 aa). Residues 518 to 521 carry the PDZ-binding motif; it reads ETSV.

Belongs to the Vang family. Interacts with dvl/dsh. Interacts with prickle3. In terms of tissue distribution, during gastrulation, broadly expressed throughout the marginal zone and animal cap region. From the neurula stages, expression becomes concentrated in neural tissues, in the neural plate and neural tube.

It localises to the cell membrane. In terms of biological role, has a role in non-canonical Wnt/planar cell polarity (PCP) signaling; can recruit dvl/dsh and prickle from the cytoplasm to the plasma membrane. Acts in a PCP complex to regulate the polarized assembly of fibronectrin on the surface of the mesoderm during gastrulation. Regulates convergent extension cell movements in both dorsal mesoderm and neural tissue during gastrulation, without affecting cell fate. Regulates neural fold closure during neurulation. May be required for cell surface localization of fzd3 and fzd6 in the inner ear. In Xenopus laevis (African clawed frog), this protein is Vang-like protein 2-A (vangl2-a).